Reading from the N-terminus, the 117-residue chain is LIM and senescent cell antigen-like-containing domain protein 3 (117 aa).

In terms of domain architecture, LIM zinc-binding spans 70–117 (ATCERCKGGFAPAETIVNSNGELYHEQCFVCAQCFQQFPEGLFYEERT).

Detected in testis.

The protein localises to the cytoplasm. The chain is LIM and senescent cell antigen-like-containing domain protein 3 (LIMS3) from Homo sapiens (Human).